We begin with the raw amino-acid sequence, 513 residues long: Cytochrome P450 705A1 (513 aa).

Residues 9–29 (QNCFIIILLCSFSLISYFVFF) form a helical membrane-spanning segment. Heme is bound at residue C448.

It belongs to the cytochrome P450 family. It depends on heme as a cofactor. As to expression, expressed in root stele, root cortex, root epidermis, root pericycle of the root hair zone, and quiescent center at the root meristematic zone.

Its subcellular location is the membrane. In terms of biological role, cleaves the arabidiol side chain at C15 to form 14-apo-arabidiol and a side-chain fragment. Involved in the biosynthesis of the volatile homoterpene (E)-4,8-dimethyl-1,3,7-nonatriene (DMNT) in roots. Involved in the production of DMNT by degrading the triterpene arabidiol. May be involved in the defense again the fungal root pathogen Pythium irregulare by producing DMNT. The polypeptide is Cytochrome P450 705A1 (Arabidopsis thaliana (Mouse-ear cress)).